Reading from the N-terminus, the 492-residue chain is Steroid 21-hydroxylase (492 aa).

Positions 91 and 120 each coordinate heme b. Arginine 231 provides a ligand contact to 17alpha-hydroxyprogesterone. Arginine 231 is a binding site for progesterone. Positions 363, 424, and 426 each coordinate heme b.

The protein belongs to the cytochrome P450 family. The cofactor is heme b.

The protein resides in the endoplasmic reticulum membrane. The protein localises to the microsome membrane. The catalysed reaction is 17alpha-hydroxyprogesterone + reduced [NADPH--hemoprotein reductase] + O2 = 11-deoxycortisol + oxidized [NADPH--hemoprotein reductase] + H2O + H(+). It carries out the reaction progesterone + reduced [NADPH--hemoprotein reductase] + O2 = 21-hydroxyprogesterone + oxidized [NADPH--hemoprotein reductase] + H2O + H(+). Specifically catalyzes the 21-hydroxylation of steroids. Required for the adrenal synthesis of mineralocorticoids and glucocorticoids. This is Steroid 21-hydroxylase (CYP21) from Canis lupus familiaris (Dog).